Here is a 295-residue protein sequence, read N- to C-terminus: Small ribosomal subunit protein uS2 (295 aa).

A disordered region spans residues 261-295; it reads QAKKFSKTKNIDEETNTEFEQVLNDADENKNSDNA.

This sequence belongs to the universal ribosomal protein uS2 family.

This is Small ribosomal subunit protein uS2 from Rickettsia rickettsii (strain Sheila Smith).